Reading from the N-terminus, the 92-residue chain is Small ribosomal subunit protein uS19 (92 aa).

This sequence belongs to the universal ribosomal protein uS19 family.

In terms of biological role, protein S19 forms a complex with S13 that binds strongly to the 16S ribosomal RNA. The sequence is that of Small ribosomal subunit protein uS19 from Caulobacter vibrioides (strain ATCC 19089 / CIP 103742 / CB 15) (Caulobacter crescentus).